The following is a 701-amino-acid chain: Transcription factor PDR8 (701 aa).

The tract at residues 1-22 (MDGSHFPMKSTTGEPVSSGKKG) is disordered. The zn(2)-C6 fungal-type DNA-binding region spans 31–59 (CAFCRKRKLKCSQARPMCQQCVIRKLPQC).

It localises to the cytoplasm. The protein resides in the nucleus. Up-regulates the transcription of the genes for ATP-binding cassette (ABC) transporters YOR1 and PDR15, for major facilitator superfamily transporter AZR1, for pleiotropic drug resistance SNG1, for alpha-glucosidase YJL216C and for YLL056C. This chain is Transcription factor PDR8 (PDR8), found in Saccharomyces cerevisiae (strain ATCC 204508 / S288c) (Baker's yeast).